The sequence spans 587 residues: Complement component C8 beta chain (587 aa).

A signal peptide spans 1-31 (MNHKLKPTVGLGYCLLCAALCLLLLRDVAIA). The propeptide occupies 32 to 44 (GSGEEPSGVREAR). Positions 56–111 (DCVQSEWSSWTRCDVCRKKRYRYAKLVQPSQFGGEPCHVQGKEVEPCSPPSRYDCT) constitute a TSP type-1 1 domain. 5 cysteine pairs are disulfide-bonded: cysteine 57–cysteine 92, cysteine 68–cysteine 102, cysteine 71–cysteine 110, cysteine 118–cysteine 129, and cysteine 123–cysteine 142. C-linked (Man) tryptophan glycans are attached at residues tryptophan 62 and tryptophan 65. The 43-residue stretch at 117-159 (LCEGFLCTYTGRCVPIDLRCNGDDDCGDWSAEKGSPKVPKACK) folds into the LDL-receptor class A domain. Ca(2+) is bound by residues leucine 134, asparagine 137, aspartate 139, aspartate 141, and glutamate 148. Residues 154–500 (VPKACKQEAQ…EYLEESSSCR (347 aa)) enclose the MACPF domain. Residues cysteine 158 and cysteine 196 are joined by a disulfide bond. 4 beta stranded membrane passes run 248–255 (TTVSIGFA), 258–265 (GVAEFGFN), 375–382 (EQIVLKVG), and 388–395 (VYVTVGLE). Cystine bridges form between cysteine 374–cysteine 399, cysteine 499–cysteine 546, cysteine 501–cysteine 517, cysteine 504–cysteine 519, and cysteine 521–cysteine 530. The EGF-like domain maps to 501–531 (CAPCRNNGLAVLKGTRCECVCPSGYSGLGCE). One can recognise a TSP type-1 2 domain in the interval 541-587 (DGSWSCWGSWSPCRGRSKTRSRQCNNPAPSSGGIACRGLQMETTDCF). Tryptophan 547 and tryptophan 550 each carry a C-linked (Man) tryptophan glycan. Cysteine 553 and cysteine 586 form a disulfide bridge.

It belongs to the complement C6/C7/C8/C9 family. In terms of assembly, heterotrimer of 3 chains: alpha (C8A), beta (C8B) and gamma (C8G); the alpha and gamma chains are disulfide bonded. Component of the membrane attack complex (MAC), composed of complement C5b, C6, C7, C8A, C8B, C8G and multiple copies of the pore-forming subunit C9.

The protein localises to the secreted. It is found in the target cell membrane. Its function is as follows. Component of the membrane attack complex (MAC), a multiprotein complex activated by the complement cascade, which inserts into a target cell membrane and forms a pore, leading to target cell membrane rupture and cell lysis. The MAC is initiated by proteolytic cleavage of C5 into complement C5b in response to the classical, alternative, lectin and GZMK complement pathways. The complement pathways consist in a cascade of proteins that leads to phagocytosis and breakdown of pathogens and signaling that strengthens the adaptive immune system. C8B, together with C8A and C8G, inserts into the target membrane, but does not form pores by itself. During MAC assembly, associates with C5b, C6 and C7 to form the C5b8 intermediate complex that inserts into the target membrane and traverses the bilayer increasing membrane rigidity. This Oncorhynchus mykiss (Rainbow trout) protein is Complement component C8 beta chain (c8b).